The primary structure comprises 296 residues: uncharacterized protein (296 aa).

10 helical membrane-spanning segments follow: residues 8-28 (LFVL…ALAP), 34-54 (LAFG…AVWI), 63-83 (WAWP…PLFF), 89-109 (TGIA…AGTL), 121-141 (SWWI…SDSS), 147-167 (VAGV…TLIS), 183-203 (VFMI…ISWI), 208-228 (GLGT…FLFA), 238-258 (AAVT…VFFI), and 261-281 (MLSP…LVIS). EamA domains follow at residues 15 to 138 (FFWG…LLFS) and 158 to 282 (ASFA…VISA).

It belongs to the EamA transporter family.

It localises to the cell membrane. This is an uncharacterized protein from Bacillus subtilis (strain 168).